The sequence spans 76 residues: uncharacterized protein (76 aa).

The next 3 helical transmembrane spans lie at 1-21, 35-55, and 56-76; these read MTAIIVYSCLTMCVIYFHLQL, CFDIFLLLIEMLKLIFYLLII, and NNKFYIFIIISIALITINTMI.

Its subcellular location is the cell membrane. This is an uncharacterized protein from Borreliella burgdorferi (strain ATCC 35210 / DSM 4680 / CIP 102532 / B31) (Borrelia burgdorferi).